The chain runs to 515 residues: ATP synthase subunit alpha (515 aa).

Glycine 171 to threonine 178 serves as a coordination point for ATP.

Belongs to the ATPase alpha/beta chains family. In terms of assembly, F-type ATPases have 2 components, CF(1) - the catalytic core - and CF(0) - the membrane proton channel. CF(1) has five subunits: alpha(3), beta(3), gamma(1), delta(1), epsilon(1). CF(0) has three main subunits: a(1), b(2) and c(9-12). The alpha and beta chains form an alternating ring which encloses part of the gamma chain. CF(1) is attached to CF(0) by a central stalk formed by the gamma and epsilon chains, while a peripheral stalk is formed by the delta and b chains.

The protein resides in the cell inner membrane. The catalysed reaction is ATP + H2O + 4 H(+)(in) = ADP + phosphate + 5 H(+)(out). Its function is as follows. Produces ATP from ADP in the presence of a proton gradient across the membrane. The alpha chain is a regulatory subunit. The polypeptide is ATP synthase subunit alpha (Xylella fastidiosa (strain 9a5c)).